We begin with the raw amino-acid sequence, 635 residues long: Chaperone protein DnaK (635 aa).

T198 carries the post-translational modification Phosphothreonine; by autocatalysis. Residues 606–635 (QATAASPGAEAPKADDDVVDAEFSEVDENK) are disordered. Acidic residues predominate over residues 622–635 (DVVDAEFSEVDENK).

The protein belongs to the heat shock protein 70 family.

In terms of biological role, acts as a chaperone. The chain is Chaperone protein DnaK from Novosphingobium aromaticivorans (strain ATCC 700278 / DSM 12444 / CCUG 56034 / CIP 105152 / NBRC 16084 / F199).